Reading from the N-terminus, the 91-residue chain is Small ribosomal subunit protein uS19 (91 aa).

It belongs to the universal ribosomal protein uS19 family.

Functionally, protein S19 forms a complex with S13 that binds strongly to the 16S ribosomal RNA. The chain is Small ribosomal subunit protein uS19 from Synechococcus sp. (strain RCC307).